The sequence spans 590 residues: Multidrug resistance ABC transporter ATP-binding and permease protein (590 aa).

6 consecutive transmembrane segments (helical) span residues 35-55 (YLFFVIGIVAGIIGTLIQLQV), 79-99 (IALYIGSAAVSAIAAIVLGIF), 150-170 (IPQAFTSILLLVGSIIFMLQM), 176-196 (LAMIIAVPIVMLIMFPIMTFG), 261-281 (VMMLSMMLMIFGLLAYGIYLI), and 292-312 (LGMMMYLMNLIGVVPTVATFF). An ABC transmembrane type-1 domain is found at 38–317 (FVIGIVAGII…VATFFTELAK (280 aa)). The region spanning 349 to 584 (LSAHHVDFAY…HPLYAKYVSE (236 aa)) is the ABC transporter domain. 382 to 389 (GPSGGGKS) provides a ligand contact to ATP.

The protein belongs to the ABC transporter superfamily. Multidrug exporter LmrA (TC 3.A.1.117.1) family. As to quaternary structure, homodimer.

Its subcellular location is the cell membrane. The catalysed reaction is ATP + H2O + xenobioticSide 1 = ADP + phosphate + xenobioticSide 2.. Functionally, efflux transporter for a variety of amphiphilic cationic compounds, including antibiotics. The polypeptide is Multidrug resistance ABC transporter ATP-binding and permease protein (lmrA) (Lactococcus lactis subsp. cremoris (strain MG1363)).